Reading from the N-terminus, the 177-residue chain is CCHC-type zinc finger nucleic acid binding protein (177 aa).

The residue at position 2 (Ser2) is an N-acetylserine. The segment at 4 to 21 (NECFKCGRSGHWARECPT) adopts a CCHC-type 1 zinc-finger fold. Residue Lys8 is modified to N6-acetyllysine. 2 positions are modified to omega-N-methylarginine; by PRMT1: Arg25 and Arg27. The tract at residues 25–38 (RGRGMRSRGRGGFT) is RNA-binding Arg/Gly-rich region (RGG-box). Residues Arg32 and Arg34 each carry the omega-N-methylarginine modification. Phosphoserine is present on Ser49. CCHC-type zinc fingers lie at residues 52 to 69 (DICYRCGESGHLAKDCDL), 72 to 89 (DACYNCGRGGHIAKDCKE), 96 to 113 (QCCYNCGKPGHLARDCDH), 117 to 134 (QKCYSCGEFGHIQKDCTK), 135 to 152 (VKCYRCGETGHVAINCSK), and 156 to 173 (VNCYRCGESGHLARECTI). Omega-N-methylarginine occurs at positions 73, 79, and 80.

In terms of assembly, associates with the 40S ribosomal subunit, the 80S ribosome and with polysomes. Post-translationally, arginine methylation by PRMT1 in the Arg/Gly-rich region impedes RNA binding. Expressed in the liver, kidney, spleen, testis, lung, muscle and adrenal glands.

Its subcellular location is the nucleus. The protein resides in the cytoplasm. It is found in the endoplasmic reticulum. Its function is as follows. Single-stranded DNA-binding protein that preferentially binds to the sterol regulatory element (SRE) sequence 5'-GTGCGGTG-3', and thereby mediates transcriptional repression. Has a role as transactivator of the Myc promoter. Binds single-stranded RNA in a sequence-specific manner. Binds G-rich elements in target mRNA coding sequences. Prevents G-quadruplex structure formation in vitro, suggesting a role in supporting translation by resolving stable structures on mRNAs. In terms of biological role, binds to RNA. The protein is CCHC-type zinc finger nucleic acid binding protein of Homo sapiens (Human).